We begin with the raw amino-acid sequence, 303 residues long: Aspartate carbamoyltransferase catalytic subunit (303 aa).

Residues Arg-49 and Thr-50 each coordinate carbamoyl phosphate. An L-aspartate-binding site is contributed by Lys-77. Carbamoyl phosphate is bound by residues Arg-99, His-126, and Gln-129. L-aspartate-binding residues include Arg-159 and Arg-211. Carbamoyl phosphate-binding residues include Ser-252 and Pro-253.

Belongs to the aspartate/ornithine carbamoyltransferase superfamily. ATCase family. In terms of assembly, heterododecamer (2C3:3R2) of six catalytic PyrB chains organized as two trimers (C3), and six regulatory PyrI chains organized as three dimers (R2).

The enzyme catalyses carbamoyl phosphate + L-aspartate = N-carbamoyl-L-aspartate + phosphate + H(+). The protein operates within pyrimidine metabolism; UMP biosynthesis via de novo pathway; (S)-dihydroorotate from bicarbonate: step 2/3. In terms of biological role, catalyzes the condensation of carbamoyl phosphate and aspartate to form carbamoyl aspartate and inorganic phosphate, the committed step in the de novo pyrimidine nucleotide biosynthesis pathway. This is Aspartate carbamoyltransferase catalytic subunit from Listeria innocua serovar 6a (strain ATCC BAA-680 / CLIP 11262).